The primary structure comprises 255 residues: Small ribosomal subunit protein eS1 (255 aa).

The residue at position 2 (A2) is an N-acetylalanine; partial.

It belongs to the eukaryotic ribosomal protein eS1 family. As to quaternary structure, component of the small ribosomal subunit. Mature ribosomes consist of a small (40S) and a large (60S) subunit. The 40S subunit contains about 33 different proteins and 1 molecule of RNA (18S). The 60S subunit contains about 49 different proteins and 3 molecules of RNA (25S, 5.8S and 5S).

It is found in the cytoplasm. In Arthroderma otae (strain ATCC MYA-4605 / CBS 113480) (Microsporum canis), this protein is Small ribosomal subunit protein eS1.